A 419-amino-acid chain; its full sequence is Transcription termination factor Rho (419 aa).

The 76-residue stretch at 48–123 (DIFGDGVLEI…LKVNAVNYDK (76 aa)) folds into the Rho RNA-BD domain. RNA-binding regions lie at residues 61 to 66 (GFGFLR), 78 to 80 (DIY), and 108 to 110 (ERY). Residues 169–174 (GRGQRG), 181–186 (KAGKTI), and Arg-212 each bind ATP. Residues 284–288 (VLTGG) form an RNA-binding 2 region.

Belongs to the Rho family. In terms of assembly, homohexamer. The homohexamer assembles into an open ring structure.

Its function is as follows. Facilitates transcription termination by a mechanism that involves Rho binding to the nascent RNA, activation of Rho's RNA-dependent ATPase activity, and release of the mRNA from the DNA template. The protein is Transcription termination factor Rho of Buchnera aphidicola subsp. Schizaphis graminum (strain Sg).